Consider the following 86-residue polypeptide: MKASMFLALTGLALLFVVCYASESEEKEFSNELLSSVLAVDDNSKGEERECLGFGKGCNPSNDQCCKSSNLVCSRKHRWCKYEIGK.

The signal sequence occupies residues 1–21 (MKASMFLALTGLALLFVVCYA). Positions 22–49 (SESEEKEFSNELLSSVLAVDDNSKGEER) are excised as a propeptide. Intrachain disulfides connect C51–C66, C58–C73, and C65–C80. I84 carries the isoleucine amide modification.

It belongs to the neurotoxin 10 (Hwtx-1) family. 22 (Htx-4) subfamily. As to quaternary structure, monomer. Expressed by the venom gland.

The protein resides in the secreted. In terms of biological role, neurotoxin. Selectively blocks neuronal tetrodotoxin-sensitive voltage-gated sodium channels (Nav) with an IC(50) of 44.6 nM. Does not affect tetrodotoxin-resistant voltage-gated sodium channels or calcium channels. The chain is Mu-theraphotoxin-Hhn1b 3 from Cyriopagopus hainanus (Chinese bird spider).